The chain runs to 366 residues: DNA replication and repair protein RecF (366 aa).

30 to 37 (GRNAQGKT) provides a ligand contact to ATP.

This sequence belongs to the RecF family.

It localises to the cytoplasm. The RecF protein is involved in DNA metabolism; it is required for DNA replication and normal SOS inducibility. RecF binds preferentially to single-stranded, linear DNA. It also seems to bind ATP. This chain is DNA replication and repair protein RecF, found in Streptococcus thermophilus (strain CNRZ 1066).